The chain runs to 480 residues: Glutamyl-tRNA(Gln) amidotransferase subunit A (480 aa).

Catalysis depends on charge relay system residues Lys-79 and Ser-154. The interval 133-156 (NENSAYGPVRNPRDKSRVPGGSSG) is disordered. Ser-178 functions as the Acyl-ester intermediate in the catalytic mechanism.

The protein belongs to the amidase family. GatA subfamily. In terms of assembly, heterotrimer of A, B and C subunits.

It carries out the reaction L-glutamyl-tRNA(Gln) + L-glutamine + ATP + H2O = L-glutaminyl-tRNA(Gln) + L-glutamate + ADP + phosphate + H(+). Functionally, allows the formation of correctly charged Gln-tRNA(Gln) through the transamidation of misacylated Glu-tRNA(Gln) in organisms which lack glutaminyl-tRNA synthetase. The reaction takes place in the presence of glutamine and ATP through an activated gamma-phospho-Glu-tRNA(Gln). The protein is Glutamyl-tRNA(Gln) amidotransferase subunit A of Koribacter versatilis (strain Ellin345).